The following is a 380-amino-acid chain: Cytochrome b (380 aa).

The next 4 helical transmembrane spans lie at phenylalanine 33–methionine 53, tryptophan 77–isoleucine 98, tryptophan 113–leucine 133, and phenylalanine 178–leucine 198. Positions 83 and 97 each coordinate heme b. Histidine 182 and histidine 196 together coordinate heme b. Histidine 201 contacts a ubiquinone. 4 helical membrane passes run tyrosine 226–alanine 246, leucine 288–histidine 308, leucine 320–glycine 340, and phenylalanine 347–proline 367.

The protein belongs to the cytochrome b family. In terms of assembly, the cytochrome bc1 complex contains 3 respiratory subunits (MT-CYB, CYC1 and UQCRFS1), 2 core proteins (UQCRC1 and UQCRC2) and probably 6 low-molecular weight proteins. Heme b is required as a cofactor.

The protein resides in the mitochondrion inner membrane. Functionally, component of the ubiquinol-cytochrome c reductase complex (complex III or cytochrome b-c1 complex) that is part of the mitochondrial respiratory chain. The b-c1 complex mediates electron transfer from ubiquinol to cytochrome c. Contributes to the generation of a proton gradient across the mitochondrial membrane that is then used for ATP synthesis. The protein is Cytochrome b (mt-cyb) of Salmo salar (Atlantic salmon).